The following is a 93-amino-acid chain: Small ribosomal subunit protein uS15 (93 aa).

It belongs to the universal ribosomal protein uS15 family. As to quaternary structure, part of the 30S ribosomal subunit. Forms a bridge to the 50S subunit in the 70S ribosome, contacting the 23S rRNA.

One of the primary rRNA binding proteins, it binds directly to 16S rRNA where it helps nucleate assembly of the platform of the 30S subunit by binding and bridging several RNA helices of the 16S rRNA. Functionally, forms an intersubunit bridge (bridge B4) with the 23S rRNA of the 50S subunit in the ribosome. The polypeptide is Small ribosomal subunit protein uS15 (Anaplasma marginale (strain Florida)).